Consider the following 294-residue polypeptide: 33 kDa chaperonin (294 aa).

2 disulfide bridges follow: cysteine 239–cysteine 241 and cysteine 272–cysteine 275.

This sequence belongs to the HSP33 family. Under oxidizing conditions two disulfide bonds are formed involving the reactive cysteines. Under reducing conditions zinc is bound to the reactive cysteines and the protein is inactive.

The protein localises to the cytoplasm. In terms of biological role, redox regulated molecular chaperone. Protects both thermally unfolding and oxidatively damaged proteins from irreversible aggregation. Plays an important role in the bacterial defense system toward oxidative stress. This chain is 33 kDa chaperonin, found in Lacticaseibacillus casei (strain BL23) (Lactobacillus casei).